The sequence spans 123 residues: Small ribosomal subunit protein uS12 (123 aa).

Basic residues predominate over residues 10-20; the sequence is KGRKKVKKKKT. A disordered region spans residues 10–32; that stretch reads KGRKKVKKKKTAPALQGSPQKRG. Asp-89 is modified (3-methylthioaspartic acid).

It belongs to the universal ribosomal protein uS12 family. As to quaternary structure, part of the 30S ribosomal subunit. Contacts proteins S8 and S17. May interact with IF1 in the 30S initiation complex.

In terms of biological role, with S4 and S5 plays an important role in translational accuracy. Interacts with and stabilizes bases of the 16S rRNA that are involved in tRNA selection in the A site and with the mRNA backbone. Located at the interface of the 30S and 50S subunits, it traverses the body of the 30S subunit contacting proteins on the other side and probably holding the rRNA structure together. The combined cluster of proteins S8, S12 and S17 appears to hold together the shoulder and platform of the 30S subunit. The protein is Small ribosomal subunit protein uS12 of Halothermothrix orenii (strain H 168 / OCM 544 / DSM 9562).